The primary structure comprises 841 residues: DNA ligase (841 aa).

NAD(+) contacts are provided by residues 54 to 58 (DAEYD), 103 to 104 (SL), and glutamate 143. The N6-AMP-lysine intermediate role is filled by lysine 145. Arginine 166, glutamate 203, lysine 321, and lysine 345 together coordinate NAD(+). Positions 471, 474, 489, and 495 each coordinate Zn(2+). Residues 554 to 575 (KTVAESDQMPSEGSSVGASGKH) are disordered. A compositionally biased stretch (polar residues) spans 561 to 570 (QMPSEGSSVG). Residues 764-841 (GINKAVAGKT…SEAELLTLLG (78 aa)) form the BRCT domain.

This sequence belongs to the NAD-dependent DNA ligase family. LigA subfamily. Mg(2+) serves as cofactor. The cofactor is Mn(2+).

It catalyses the reaction NAD(+) + (deoxyribonucleotide)n-3'-hydroxyl + 5'-phospho-(deoxyribonucleotide)m = (deoxyribonucleotide)n+m + AMP + beta-nicotinamide D-nucleotide.. DNA ligase that catalyzes the formation of phosphodiester linkages between 5'-phosphoryl and 3'-hydroxyl groups in double-stranded DNA using NAD as a coenzyme and as the energy source for the reaction. It is essential for DNA replication and repair of damaged DNA. The protein is DNA ligase of Neisseria meningitidis serogroup C (strain 053442).